Reading from the N-terminus, the 125-residue chain is Protein JAZ13 (125 aa).

Positions 6-10 match the EAR motif; it reads LDLHL. A disordered region spans residues 99-125; the sequence is KKRSKSFTLTPNYTSSTSSSSSSLHNF. Positions 112–125 are enriched in low complexity; it reads TSSTSSSSSSLHNF.

As to quaternary structure, monomer. Lack of homodimerization, and very weak or no interaction with AFPH2/NINJA and other JAZ proteins. Interacts (via EAR motif) with TPL. Interacts (via jas motif) with MYC2. In terms of processing, phosphorylated at multiple serine residues.

In terms of biological role, non-TIFY functional repressor of jasmonate (JA)-mediated growth and defense responses. Intrinsically resistant to JA-induced turnover, probably due to the absence of the canonical degron that strongly interacts with COI1 in the presence of JA-Ile in the TIFY/JAZ proteins. The chain is Protein JAZ13 from Arabidopsis thaliana (Mouse-ear cress).